A 98-amino-acid polypeptide reads, in one-letter code: NADH-ubiquinone oxidoreductase chain 4L (98 aa).

3 consecutive transmembrane segments (helical) span residues 1 to 21 (MPSI…GTLI), 26 to 46 (LMSS…LTSL), and 61 to 81 (IILL…LVMV).

The protein belongs to the complex I subunit 4L family. As to quaternary structure, core subunit of respiratory chain NADH dehydrogenase (Complex I) which is composed of 45 different subunits.

Its subcellular location is the mitochondrion inner membrane. The enzyme catalyses a ubiquinone + NADH + 5 H(+)(in) = a ubiquinol + NAD(+) + 4 H(+)(out). Core subunit of the mitochondrial membrane respiratory chain NADH dehydrogenase (Complex I) which catalyzes electron transfer from NADH through the respiratory chain, using ubiquinone as an electron acceptor. Part of the enzyme membrane arm which is embedded in the lipid bilayer and involved in proton translocation. The polypeptide is NADH-ubiquinone oxidoreductase chain 4L (MT-ND4L) (Otolemur crassicaudatus (Brown greater galago)).